We begin with the raw amino-acid sequence, 131 residues long: Agouti-signaling protein (131 aa).

The N-terminal stretch at 1 to 22 (MDVTRLLLATLVGFLCFLTVHS) is a signal peptide. N39 carries N-linked (GlcNAc...) asparagine glycosylation. Residues 58 to 96 (KSKKISRKEAEKRKRSSKKKASIKKVARPPPPSPCVATR) form a disordered region. The segment covering 70–84 (RKRSSKKKASIKKVA) has biased composition (basic residues). 5 cysteine pairs are disulfide-bonded: C92-C107, C99-C113, C106-C124, C110-C131, and C115-C122. The region spanning 92 to 131 (CVATRDSCKPPAPACCNPCASCQCRFFGSACTCRVLNPNC) is the Agouti domain.

It is found in the secreted. In terms of biological role, involved in the regulation of melanogenesis. The binding of ASP to MC1R precludes alpha-MSH initiated signaling and thus blocks production of cAMP, leading to a down-regulation of eumelanogenesis (brown/black pigment) and thus increasing synthesis of pheomelanin (yellow/red pigment). The sequence is that of Agouti-signaling protein from Rattus norvegicus (Rat).